Reading from the N-terminus, the 438-residue chain is Glutamate--tRNA ligase 2 (438 aa).

A 'HIGH' region motif is present at residues 6–16 (PSPTGDMHTGN). The short motif at 231–235 (KMSKR) is the 'KMSKS' region element. Lys234 serves as a coordination point for ATP.

This sequence belongs to the class-I aminoacyl-tRNA synthetase family. Glutamate--tRNA ligase type 1 subfamily. Monomer.

The protein resides in the cytoplasm. It catalyses the reaction tRNA(Glu) + L-glutamate + ATP = L-glutamyl-tRNA(Glu) + AMP + diphosphate. In terms of biological role, catalyzes the attachment of glutamate to tRNA(Glu) in a two-step reaction: glutamate is first activated by ATP to form Glu-AMP and then transferred to the acceptor end of tRNA(Glu). This Wolinella succinogenes (strain ATCC 29543 / DSM 1740 / CCUG 13145 / JCM 31913 / LMG 7466 / NCTC 11488 / FDC 602W) (Vibrio succinogenes) protein is Glutamate--tRNA ligase 2.